The sequence spans 242 residues: Myogenic factor 6 (242 aa).

Residues 31–63 (SPLYPGSDGTLSPCQDQMPPEAGSDSSGEEHVL) are disordered. Residues 93–144 (DRRKAATLRERRRLKKINEAFEALKRRTVANPNQRLPKVEILRSAISYIERL) enclose the bHLH domain.

Efficient DNA binding requires dimerization with another bHLH protein. Interacts with CSRP3. In terms of tissue distribution, skeletal muscle.

Its subcellular location is the nucleus. In terms of biological role, involved in muscle differentiation (myogenic factor). Induces fibroblasts to differentiate into myoblasts. Probable sequence specific DNA-binding protein. This chain is Myogenic factor 6 (MYF6), found in Homo sapiens (Human).